The following is a 205-amino-acid chain: Cytochrome c oxidase subunit 2 (205 aa).

The Cu cation site is built by H115, C150, E152, C154, H158, and M161. E152 serves as a coordination point for Mg(2+).

The protein belongs to the cytochrome c oxidase subunit 2 family. As to quaternary structure, component of the cytochrome c oxidase (complex IV, CIV), a multisubunit enzyme composed of a catalytic core of 3 subunits and several supernumerary subunits. The complex exists as a monomer or a dimer and forms supercomplexes (SCs) in the inner mitochondrial membrane with ubiquinol-cytochrome c oxidoreductase (cytochrome b-c1 complex, complex III, CIII). Cu cation serves as cofactor.

Its subcellular location is the mitochondrion inner membrane. It carries out the reaction 4 Fe(II)-[cytochrome c] + O2 + 8 H(+)(in) = 4 Fe(III)-[cytochrome c] + 2 H2O + 4 H(+)(out). Its function is as follows. Component of the cytochrome c oxidase, the last enzyme in the mitochondrial electron transport chain which drives oxidative phosphorylation. The respiratory chain contains 3 multisubunit complexes succinate dehydrogenase (complex II, CII), ubiquinol-cytochrome c oxidoreductase (cytochrome b-c1 complex, complex III, CIII) and cytochrome c oxidase (complex IV, CIV), that cooperate to transfer electrons derived from NADH and succinate to molecular oxygen, creating an electrochemical gradient over the inner membrane that drives transmembrane transport and the ATP synthase. Cytochrome c oxidase is the component of the respiratory chain that catalyzes the reduction of oxygen to water. Electrons originating from reduced cytochrome c in the intermembrane space (IMS) are transferred via the dinuclear copper A center (CU(A)) of subunit 2 and heme A of subunit 1 to the active site in subunit 1, a binuclear center (BNC) formed by heme A3 and copper B (CU(B)). The BNC reduces molecular oxygen to 2 water molecules using 4 electrons from cytochrome c in the IMS and 4 protons from the mitochondrial matrix. In Paramecium tetraurelia, this protein is Cytochrome c oxidase subunit 2 (COII).